We begin with the raw amino-acid sequence, 214 residues long: NADH-ubiquinone oxidoreductase chain 5 (214 aa).

The next 4 helical transmembrane spans lie at 14 to 34, 58 to 78, 92 to 112, and 192 to 212; these read LNTW…TYSI, PLIT…GMII, MPLI…ILAL, and TGLI…MILM.

This sequence belongs to the complex I subunit 5 family.

It localises to the mitochondrion inner membrane. It carries out the reaction a ubiquinone + NADH + 5 H(+)(in) = a ubiquinol + NAD(+) + 4 H(+)(out). In terms of biological role, core subunit of the mitochondrial membrane respiratory chain NADH dehydrogenase (Complex I) that is believed to belong to the minimal assembly required for catalysis. Complex I functions in the transfer of electrons from NADH to the respiratory chain. The immediate electron acceptor for the enzyme is believed to be ubiquinone. The protein is NADH-ubiquinone oxidoreductase chain 5 (MT-ND5) of Anser caerulescens (Snow goose).